Reading from the N-terminus, the 382-residue chain is 26S proteasome non-ATPase regulatory subunit 6 (382 aa).

The PCI domain occupies 186–354 (QFKEASDLYL…GVIETTRSDA (169 aa)).

Belongs to the proteasome subunit S10 family.

Acts as a regulatory subunit of the 26S proteasome which is involved in the ATP-dependent degradation of ubiquitinated proteins. The sequence is that of 26S proteasome non-ATPase regulatory subunit 6 (psmD6) from Dictyostelium discoideum (Social amoeba).